A 79-amino-acid chain; its full sequence is uncharacterized protein (79 aa).

Residues 20–52 (TERGAGLSPAAPPDPSPAIAPTMAEGGVPSPGP) are disordered.

This is an uncharacterized protein from Homo sapiens (Human).